The chain runs to 153 residues: Aminoglycoside N(6')-acetyltransferase type 1 (153 aa).

One can recognise an N-acetyltransferase domain in the interval 6–153 (PTIRQATPAD…YFRMPLEPSA (148 aa)). Positions 27, 70, 83, 119, and 140 each coordinate substrate.

In terms of assembly, homodimer.

It carries out the reaction kanamycin B + acetyl-CoA = N(6')-acetylkanamycin B + CoA + H(+). Catalyzes the transfer of an acetyl group from acetyl-CoA to the 6'-amino group of aminoglycoside molecules conferring resistance to antibiotics containing the purpurosamine ring including amikacin, gentamicin, kanamycin B, tobramycin, netilmicin, and isepamicin. The chain is Aminoglycoside N(6')-acetyltransferase type 1 from Stenotrophomonas maltophilia (Pseudomonas maltophilia).